Here is a 328-residue protein sequence, read N- to C-terminus: Thiamine-monophosphate kinase (328 aa).

Mg(2+) contacts are provided by Asp-30, Thr-45, Thr-46, and Asp-47. His-54 contacts substrate. Asp-75 and Asp-122 together coordinate Mg(2+). ATP is bound by residues 121 to 122 and Arg-146; that span reads GD. Asp-211 contributes to the Mg(2+) binding site. Ser-213 is a binding site for ATP. Asp-214 contacts Mg(2+). Substrate contacts are provided by Glu-262 and Phe-321.

Belongs to the thiamine-monophosphate kinase family.

The enzyme catalyses thiamine phosphate + ATP = thiamine diphosphate + ADP. It participates in cofactor biosynthesis; thiamine diphosphate biosynthesis; thiamine diphosphate from thiamine phosphate: step 1/1. In terms of biological role, catalyzes the ATP-dependent phosphorylation of thiamine-monophosphate (TMP) to form thiamine-pyrophosphate (TPP), the active form of vitamin B1. The sequence is that of Thiamine-monophosphate kinase from Haemophilus influenzae (strain ATCC 51907 / DSM 11121 / KW20 / Rd).